Here is a 517-residue protein sequence, read N- to C-terminus: Nuclear transcription factor Y subunit alpha (517 aa).

Positions 1–11 (MNQINYLTSER) are enriched in polar residues. Disordered regions lie at residues 1–95 (MNQI…MDIH), 121–183 (RIDY…NFNY), 252–281 (ESEN…RGCG), and 304–517 (AAAN…NNRS). Composition is skewed to low complexity over residues 26 to 81 (NNSS…SSSS) and 126 to 183 (NNNN…NFNY). The Subunit association domain (SAD) signature appears at 232–255 (YVNAKQYNRILKRRAARAKLESEN). Positions 262-287 (KAYQHESRHQHAIRRQRGCGGRFLTK) form a DNA-binding region, NFYA/HAP2-type. The span at 304 to 345 (AAANPNASSTSTTTSNITNNNNNNNNNNNTNNNNNNNNTNVN) shows a compositional bias: low complexity. Residues 359–371 (SDDDIENDVENDS) show a composition bias toward acidic residues. Composition is skewed to low complexity over residues 377–388 (KNNSNSPNQSSS) and 408–423 (NNNI…NNNN). The segment covering 438-447 (PLLNNGHIQA) has biased composition (polar residues). The span at 448 to 517 (QQNQSPSSSP…PLSNFSNNRS (70 aa)) shows a compositional bias: low complexity.

It belongs to the NFYA/HAP2 subunit family. In terms of assembly, heterotrimeric transcription factor composed of three components, nfyA, nfyB and nfyC. nfyB and nfyC must interact and dimerize for nfyA association and DNA binding.

The protein resides in the nucleus. Its function is as follows. Component of the NF-Y/HAP transcription factor complex. The NF-Y complex stimulates the transcription of various genes by recognizing and binding to a CCAAT motif in promoters. In Dictyostelium discoideum (Social amoeba), this protein is Nuclear transcription factor Y subunit alpha (nfyA).